Consider the following 96-residue polypeptide: Large ribosomal subunit protein uL23 (96 aa).

It belongs to the universal ribosomal protein uL23 family. In terms of assembly, part of the 50S ribosomal subunit. Contacts protein L29, and trigger factor when it is bound to the ribosome.

Functionally, one of the early assembly proteins it binds 23S rRNA. One of the proteins that surrounds the polypeptide exit tunnel on the outside of the ribosome. Forms the main docking site for trigger factor binding to the ribosome. The protein is Large ribosomal subunit protein uL23 of Halalkalibacterium halodurans (strain ATCC BAA-125 / DSM 18197 / FERM 7344 / JCM 9153 / C-125) (Bacillus halodurans).